Consider the following 321-residue polypeptide: Transcription factor MYB60 (321 aa).

2 HTH myb-type domains span residues 9 to 65 (KVGI…RPGI) and 66 to 116 (KRGN…KKKI). 2 DNA-binding regions (H-T-H motif) span residues 37–61 (WRSV…TNYL) and 89–112 (WAAI…NTHL). S-nitrosocysteine is present on residues Cys49 and Cys53. Disordered stretches follow at residues 196-215 (SPKA…EGSI) and 263-291 (HHQT…QKKH). A compositionally biased stretch (polar residues) spans 206 to 215 (QNSSLEEGSI). Positions 273–290 (SDDHDHDHEMKMDHDQKK) are enriched in basic and acidic residues.

Restricted to stomatal guard cells. Mostly expressed in leaves, cotyledons, hypocotyls, seeds and ripened berry skins.

Its subcellular location is the nucleus. Transcription factor involved in the regulation of gene (e.g. drought-regulated and flavonoid biosynthetic genes) expression and stomatal movements leading to negative regulation of responses to drought and responses to other physiological stimuli (e.g. light). The sequence is that of Transcription factor MYB60 from Vitis vinifera (Grape).